The chain runs to 277 residues: MSSSRPVALVTGANKGIGFAITRDLCRKFSGDVVLAARDEERGQTAVQKLQAEGLSPRFHQLDIDNPQSIRALRDFLLKEYGGLDVLVNNAGIAFKVNDDTPFHIQAEVTMKTNFFGTRDVCKELLPLIKPQGRVVNVSSMVSLRALKNCRLELQQKFRSETITEEELVGLMNKFVEDTKKGVHAEEGWPNSAYGVTKIGVTVLSRILARKLNEQRRGDKILLNACCPGWVRTDMAGPKATKSPEEGAETPVYLALLPPDAEGPHGQFVQDKKVEPW.

Ser-2 carries the post-translational modification N-acetylserine. Phosphoserine occurs at positions 2 and 30. NADP(+) is bound by residues Val-10–Val-34, Asp-63–Ile-64, and Asn-90. Glutathione contacts are provided by residues Phe-95–Val-97 and Gln-106. Ser-140 lines the substrate pocket. Ala-193–Tyr-194 is a binding site for glutathione. Tyr-194 acts as the Proton acceptor in catalysis. NADP(+)-binding positions include Tyr-194–Lys-198 and Val-231–Thr-233. At Lys-239 the chain carries N6-1-carboxyethyl lysine. The tract at residues Pro-258–Trp-277 is disordered.

Belongs to the short-chain dehydrogenases/reductases (SDR) family. As to quaternary structure, monomer.

Its subcellular location is the cytoplasm. It carries out the reaction a secondary alcohol + NADP(+) = a ketone + NADPH + H(+). The enzyme catalyses prostaglandin F2alpha + NADP(+) = prostaglandin E2 + NADPH + H(+). The catalysed reaction is prostaglandin E1 + NADP(+) = 15-oxoprostaglandin E1 + NADPH + H(+). It catalyses the reaction menadione + NADPH + H(+) = menadiol + NADP(+). It carries out the reaction prostaglandin D2 + NADP(+) = 15-oxoprostaglandin D2 + NADPH + H(+). The enzyme catalyses prostaglandin E2 + NADP(+) = 15-oxoprostaglandin E2 + NADPH + H(+). The catalysed reaction is prostaglandin F2alpha + NADP(+) = 15-oxoprostaglandin F2alpha + NADPH + H(+). It catalyses the reaction daunorubicin + NADPH + H(+) = 13-dihydrodaunorubicin + NADP(+). It carries out the reaction S-nitrosoglutathione + NADPH + H(+) = S-(hydroxysulfenamide)glutathione + NADP(+). The enzyme catalyses corticosterone + NADPH + H(+) = 20beta-dihydrocorticosterone + NADP(+). The catalysed reaction is a primary alcohol + NADP(+) = an aldehyde + NADPH + H(+). It catalyses the reaction cortisol + NADPH + H(+) = 20beta-dihydrocortisol + NADP(+). NADPH-dependent reductase with broad substrate specificity. Catalyzes the reduction of a wide variety of carbonyl compounds including quinones, prostaglandins, menadione, plus various xenobiotics. Catalyzes the reduction of the antitumor anthracyclines doxorubicin and daunorubicin to the cardiotoxic compounds doxorubicinol and daunorubicinol. Can convert prostaglandin E to prostaglandin F2-alpha. Can bind glutathione, which explains its higher affinity for glutathione-conjugated substrates. Catalyzes the reduction of S-nitrosoglutathione. In addition, participates in the glucocorticoid metabolism by catalyzing the NADPH-dependent cortisol/corticosterone into 20beta-dihydrocortisol (20b-DHF) or 20beta-corticosterone (20b-DHB), which are weak agonists of NR3C1 and NR3C2 in adipose tissue. The chain is Carbonyl reductase [NADPH] 1 from Mus musculus (Mouse).